The sequence spans 174 residues: uncharacterized protein (174 aa).

This is an uncharacterized protein from Aquifex aeolicus (strain VF5).